We begin with the raw amino-acid sequence, 161 residues long: Large ribosomal subunit protein uL15 (161 aa).

Residues 1–13 (MKLNELRDNEGAA) show a composition bias toward basic and acidic residues. The tract at residues 1 to 51 (MKLNELRDNEGAARKKKRVARGPGSGKGKTAGRGIKGQKSRSGVALNGYEG) is disordered. Positions 23–35 (PGSGKGKTAGRGI) are enriched in gly residues.

Belongs to the universal ribosomal protein uL15 family. In terms of assembly, part of the 50S ribosomal subunit.

Binds to the 23S rRNA. The chain is Large ribosomal subunit protein uL15 from Cereibacter sphaeroides (strain ATCC 17023 / DSM 158 / JCM 6121 / CCUG 31486 / LMG 2827 / NBRC 12203 / NCIMB 8253 / ATH 2.4.1.) (Rhodobacter sphaeroides).